The sequence spans 388 residues: Bifunctional enzyme IspD/IspF (388 aa).

The 2-C-methyl-D-erythritol 4-phosphate cytidylyltransferase stretch occupies residues 1-228 (MRIAALLLAA…GVIDRNLLPR (228 aa)). The 2-C-methyl-D-erythritol 2,4-cyclodiphosphate synthase stretch occupies residues 228–388 (RVGLGYDVHA…SIMVPDNGEA (161 aa)). The a divalent metal cation site is built by aspartate 234 and histidine 236. 4-CDP-2-C-methyl-D-erythritol 2-phosphate contacts are provided by residues 234–236 (DVH) and 260–261 (HS). Histidine 268 contacts a divalent metal cation. Residues 282–284 (DIG), 358–361 (TTSE), phenylalanine 365, and arginine 368 contribute to the 4-CDP-2-C-methyl-D-erythritol 2-phosphate site.

The protein in the N-terminal section; belongs to the IspD/TarI cytidylyltransferase family. IspD subfamily. This sequence in the C-terminal section; belongs to the IspF family. Requires a divalent metal cation as cofactor.

It catalyses the reaction 2-C-methyl-D-erythritol 4-phosphate + CTP + H(+) = 4-CDP-2-C-methyl-D-erythritol + diphosphate. The enzyme catalyses 4-CDP-2-C-methyl-D-erythritol 2-phosphate = 2-C-methyl-D-erythritol 2,4-cyclic diphosphate + CMP. It functions in the pathway isoprenoid biosynthesis; isopentenyl diphosphate biosynthesis via DXP pathway; isopentenyl diphosphate from 1-deoxy-D-xylulose 5-phosphate: step 2/6. Its pathway is isoprenoid biosynthesis; isopentenyl diphosphate biosynthesis via DXP pathway; isopentenyl diphosphate from 1-deoxy-D-xylulose 5-phosphate: step 4/6. Bifunctional enzyme that catalyzes the formation of 4-diphosphocytidyl-2-C-methyl-D-erythritol from CTP and 2-C-methyl-D-erythritol 4-phosphate (MEP) (IspD), and catalyzes the conversion of 4-diphosphocytidyl-2-C-methyl-D-erythritol 2-phosphate (CDP-ME2P) to 2-C-methyl-D-erythritol 2,4-cyclodiphosphate (ME-CPP) with a corresponding release of cytidine 5-monophosphate (CMP) (IspF). In Gluconobacter oxydans (strain 621H) (Gluconobacter suboxydans), this protein is Bifunctional enzyme IspD/IspF.